The primary structure comprises 137 residues: Endoribonuclease YbeY (137 aa).

Zn(2+) is bound by residues His-105, His-109, and Asp-115.

This sequence belongs to the endoribonuclease YbeY family. Zn(2+) serves as cofactor.

The protein resides in the cytoplasm. Functionally, single strand-specific metallo-endoribonuclease involved in late-stage 70S ribosome quality control and in maturation of the 3' terminus of the 16S rRNA. This Chlorobaculum tepidum (strain ATCC 49652 / DSM 12025 / NBRC 103806 / TLS) (Chlorobium tepidum) protein is Endoribonuclease YbeY.